Reading from the N-terminus, the 471-residue chain is E3 SUMO-protein ligase EGR2 (471 aa).

Over residues 127–143 the composition is skewed to low complexity; the sequence is PASTTASSNVTSASPNP. The disordered stretch occupies residues 127–177; that stretch reads PASTTASSNVTSASPNPLATGPLGVCTMSQTQPDLDHLYSPPPPPPYSGCA. Lys-246 is modified (N6-acetyllysine; by EP300). 2 disordered regions span residues 273-301 and 313-336; these read GGPS…AAAA and RPIL…RPYP. Over residues 280 to 289 the composition is skewed to gly residues; that stretch reads TGPGASGGSE. C2H2-type zinc fingers lie at residues 335-359, 365-387, and 393-415; these read YPCP…IRIH, FQCR…IRTH, and FACD…TKIH. Positions 406 to 471 are disordered; the sequence is DERKRHTKIH…GPCSSRTRTP (66 aa). The segment covering 410–420 has biased composition (basic residues); the sequence is RHTKIHLRQKE. Low complexity predominate over residues 424–437; it reads SAPSSSVPAASTAS.

This sequence belongs to the EGR C2H2-type zinc-finger protein family. Interacts with HCFC1. Interacts with WWP2. Interacts with UBC9. Interacts with CITED1. Interacts (via phosphorylated form) with SFN. In terms of processing, ubiquitinated by WWP2 leading to proteasomal degradation. Post-translationally, acetylated at Lys-246. May be deacetylated by HDAC6, HDAC10 or SIRT1.

The protein localises to the nucleus. The protein operates within protein modification; protein sumoylation. Functionally, sequence-specific DNA-binding transcription factor. Plays a role in hindbrain segmentation by regulating the expression of a subset of homeobox containing genes and in Schwann cell myelination by regulating the expression of genes involved in the formation and maintenance of myelin. Binds to two EGR2-consensus sites EGR2A (5'-CTGTAGGAG-3') and EGR2B (5'-ATGTAGGTG-3') in the HOXB3 enhancer and promotes HOXB3 transcriptional activation. Binds to specific DNA sites located in the promoter region of HOXA4, HOXB2 and ERBB2. Regulates hindbrain segmentation by controlling the expression of Hox genes, such as HOXA4, HOXB3 and HOXB2, and thereby specifying odd and even rhombomeres. Promotes the expression of HOXB3 in the rhombomere r5 in the hindbrain. Regulates myelination in the peripheral nervous system after birth, possibly by regulating the expression of myelin proteins, such as MPZ, and by promoting the differentiation of Schwann cells. Involved in the development of the jaw openener musculature, probably by playing a role in its innervation through trigeminal motor neurons. May play a role in adipogenesis, possibly by regulating the expression of CEBPB. In terms of biological role, E3 SUMO-protein ligase helping SUMO1 conjugation to its coregulators NAB1 and NAB2, whose sumoylation down-regulates EGR2 transcriptional activity. This chain is E3 SUMO-protein ligase EGR2 (EGR2), found in Sus scrofa (Pig).